The primary structure comprises 262 residues: Inner membrane protein YcfZ (262 aa).

Topologically, residues 1 to 4 (MKKF) are cytoplasmic. Residues 5–27 (IILLSLLILLPLTAASKPLIPIM) traverse the membrane as a helical segment. At 28-182 (KTLFTDVTGT…HENAPPGSTN (155 aa)) the chain is on the periplasmic side. Residues 183-202 (TLGFIAWAATFILFSRIFYY) traverse the membrane as a helical segment. The Cytoplasmic portion of the chain corresponds to 203-206 (TTRF). Residues 207-229 (IYALKFAVAMTIANMGYQALCLY) traverse the membrane as a helical segment. Over 230 to 238 (IDNSFAITR) the chain is Periplasmic. A helical transmembrane segment spans residues 239–258 (ISPLWAGLIGVCTFIAALLL). Residues 259–262 (TSKR) lie on the Cytoplasmic side of the membrane.

It is found in the cell inner membrane. This is Inner membrane protein YcfZ (ycfZ) from Escherichia coli (strain K12).